The primary structure comprises 34 residues: Photosystem II reaction center protein M (34 aa).

A helical transmembrane segment spans residues 5–25 (ILAFIATALFILIPTAFLLIL).

Belongs to the PsbM family. In terms of assembly, PSII is composed of 1 copy each of membrane proteins PsbA, PsbB, PsbC, PsbD, PsbE, PsbF, PsbH, PsbI, PsbJ, PsbK, PsbL, PsbM, PsbT, PsbX, PsbY, PsbZ, Psb30/Ycf12, at least 3 peripheral proteins of the oxygen-evolving complex and a large number of cofactors. It forms dimeric complexes.

It localises to the plastid. It is found in the chloroplast thylakoid membrane. One of the components of the core complex of photosystem II (PSII). PSII is a light-driven water:plastoquinone oxidoreductase that uses light energy to abstract electrons from H(2)O, generating O(2) and a proton gradient subsequently used for ATP formation. It consists of a core antenna complex that captures photons, and an electron transfer chain that converts photonic excitation into a charge separation. This subunit is found at the monomer-monomer interface. In Angiopteris evecta (Mule's foot fern), this protein is Photosystem II reaction center protein M.